Consider the following 785-residue polypeptide: Rho-GTPase-activating protein RGD3 (785 aa).

The residue at position 2 (serine 2) is an N-acetylserine. Residues 31–463 (ISLRNTYWTK…PQETANADVR (433 aa)) enclose the F-BAR domain. Positions 313-340 (SNGNAGNRKKKSYGELTHSDNEHEEKSN) are disordered. Over residues 329–339 (THSDNEHEEKS) the composition is skewed to basic and acidic residues. Residues 520-702 (IILRQIEKEP…TFFINERTVE (183 aa)) form the Rho-GAP domain. Residues 732–785 (TAPIHSTPKPPPNDKDGHFIPRPFKTSSTPTTPERPKRKSGLFLPINVNDVPST) are disordered. Serine 759 carries the post-translational modification Phosphoserine. Residues threonine 760, threonine 762, and threonine 763 each carry the phosphothreonine modification.

Post-translationally, phosphorylation at the C-terminus negatively regulates the activity and the polarized localization.

It localises to the cytoplasmic vesicle membrane. The protein resides in the cell membrane. It is found in the bud tip. The protein localises to the bud neck. Its function is as follows. GTPase activating protein (GAP) for RHO3 and CDC42 that binds membranes through phosphatidylinositol 4,5-bisphosphate. Plays a key role in cell polarity. Modulates the RHO3 distribution at the plasma membrane and its polarity during growth. The sequence is that of Rho-GTPase-activating protein RGD3 from Saccharomyces cerevisiae (strain ATCC 204508 / S288c) (Baker's yeast).